Reading from the N-terminus, the 111-residue chain is Prostate and testis expressed protein 2 (111 aa).

Residues 1 to 18 (MFVLVMICLFCQYWGVLN) form the signal peptide. The UPAR/Ly6 domain maps to 27–108 (LLCYKCKKYH…CKHSNYCNLP (82 aa)). Intrachain disulfides connect Cys29–Cys55, Cys32–Cys40, Cys47–Cys78, and Cys82–Cys99.

Belongs to the PATE family. As to expression, expressed in prostate, testis, brain and lung.

The protein localises to the secreted. In Mus musculus (Mouse), this protein is Prostate and testis expressed protein 2 (Pate2).